A 467-amino-acid polypeptide reads, in one-letter code: Glycogen synthase (467 aa).

K15 contributes to the ADP-alpha-D-glucose binding site.

Belongs to the glycosyltransferase 1 family. Bacterial/plant glycogen synthase subfamily.

It catalyses the reaction [(1-&gt;4)-alpha-D-glucosyl](n) + ADP-alpha-D-glucose = [(1-&gt;4)-alpha-D-glucosyl](n+1) + ADP + H(+). It participates in glycan biosynthesis; glycogen biosynthesis. In terms of biological role, synthesizes alpha-1,4-glucan chains using ADP-glucose. The protein is Glycogen synthase of Desulfitobacterium hafniense (strain DSM 10664 / DCB-2).